Here is a 122-residue protein sequence, read N- to C-terminus: Large ribosomal subunit protein uL18 (122 aa).

Belongs to the universal ribosomal protein uL18 family. Part of the 50S ribosomal subunit; part of the 5S rRNA/L5/L18/L25 subcomplex. Contacts the 5S and 23S rRNAs.

In terms of biological role, this is one of the proteins that bind and probably mediate the attachment of the 5S RNA into the large ribosomal subunit, where it forms part of the central protuberance. This is Large ribosomal subunit protein uL18 from Prochlorococcus marinus (strain AS9601).